Consider the following 460-residue polypeptide: Elongation factor 1-alpha (460 aa).

A N,N,N-trimethylglycine modification is found at glycine 2. N6,N6-dimethyllysine; alternate is present on lysine 3. At lysine 3 the chain carries N6-methyllysine; alternate. Positions 6 to 241 (KQHINIVVIG…DAIEPPVRPT (236 aa)) constitute a tr-type G domain. Positions 15 to 22 (GHVDSGKS) are G1. 15–22 (GHVDSGKS) lines the GTP pocket. An N6-methyllysine modification is found at lysine 31. The tract at residues 71 to 75 (GITID) is G2. Lysine 80 carries the N6,N6,N6-trimethyllysine modification. Residues 92–95 (DAPG) form a G3 region. GTP contacts are provided by residues 92-96 (DAPGH) and 154-157 (NKMD). The segment at 154 to 157 (NKMD) is G4. Residues 193-195 (SGF) form a G5 region. An N6,N6-dimethyllysine; alternate modification is found at lysine 317. Lysine 317 carries the N6-methyllysine; alternate modification. N6-methyllysine is present on lysine 391.

The protein belongs to the TRAFAC class translation factor GTPase superfamily. Classic translation factor GTPase family. EF-Tu/EF-1A subfamily.

The protein localises to the cytoplasm. Functionally, this protein promotes the GTP-dependent binding of aminoacyl-tRNA to the A-site of ribosomes during protein biosynthesis. The sequence is that of Elongation factor 1-alpha (tef1) from Aspergillus oryzae (strain ATCC 42149 / RIB 40) (Yellow koji mold).